We begin with the raw amino-acid sequence, 211 residues long: ATP phosphoribosyltransferase (211 aa).

Belongs to the ATP phosphoribosyltransferase family. Short subfamily. Heteromultimer composed of HisG and HisZ subunits.

The protein resides in the cytoplasm. The enzyme catalyses 1-(5-phospho-beta-D-ribosyl)-ATP + diphosphate = 5-phospho-alpha-D-ribose 1-diphosphate + ATP. It participates in amino-acid biosynthesis; L-histidine biosynthesis; L-histidine from 5-phospho-alpha-D-ribose 1-diphosphate: step 1/9. Its function is as follows. Catalyzes the condensation of ATP and 5-phosphoribose 1-diphosphate to form N'-(5'-phosphoribosyl)-ATP (PR-ATP). Has a crucial role in the pathway because the rate of histidine biosynthesis seems to be controlled primarily by regulation of HisG enzymatic activity. This is ATP phosphoribosyltransferase from Pseudomonas aeruginosa (strain UCBPP-PA14).